A 435-amino-acid polypeptide reads, in one-letter code: Tol-Pal system protein TolB (435 aa).

The N-terminal stretch at 1-20 is a signal peptide; the sequence is MRKIIAGVFIFVFLISNLYA.

Belongs to the TolB family. In terms of assembly, the Tol-Pal system is composed of five core proteins: the inner membrane proteins TolA, TolQ and TolR, the periplasmic protein TolB and the outer membrane protein Pal. They form a network linking the inner and outer membranes and the peptidoglycan layer.

The protein resides in the periplasm. In terms of biological role, part of the Tol-Pal system, which plays a role in outer membrane invagination during cell division and is important for maintaining outer membrane integrity. This Francisella tularensis subsp. tularensis (strain WY96-3418) protein is Tol-Pal system protein TolB.